We begin with the raw amino-acid sequence, 105 residues long: Large ribosomal subunit protein eL30 (105 aa).

Belongs to the eukaryotic ribosomal protein eL30 family.

The sequence is that of Large ribosomal subunit protein eL30 (RPL30) from Eremothecium gossypii (strain ATCC 10895 / CBS 109.51 / FGSC 9923 / NRRL Y-1056) (Yeast).